The primary structure comprises 255 residues: MGSIVKIRDVKLGEGIPKIAVPLVGSNEEEIMEEIAGVKTTKLDIVEWRIDYYKYVEEVEKVKKLLQKMRKNLNNIPILVTFRTAKEGGKREISLEYYIELNKAIAATGNTDMIDIELFAAEDEAVKKIVEELHEYNIKVIMSNHDFHKTPHKDELISRMCRMQQLGADIAKIAVMPCSTKDVLELLSATCEMKCKHNDTPIITMSMGTLGVITRLAGETFGSALTFGSAKAASAPGQLEVNELYKVLKLISAYR.

Residues 47–49 (EWR) and Arg83 contribute to the 3-dehydroquinate site. Residue His145 is the Proton donor/acceptor of the active site. Catalysis depends on Lys172, which acts as the Schiff-base intermediate with substrate. Residues Arg215, Ser234, and Gln238 each contribute to the 3-dehydroquinate site.

It belongs to the type-I 3-dehydroquinase family. As to quaternary structure, homodimer.

The enzyme catalyses 3-dehydroquinate = 3-dehydroshikimate + H2O. The protein operates within metabolic intermediate biosynthesis; chorismate biosynthesis; chorismate from D-erythrose 4-phosphate and phosphoenolpyruvate: step 3/7. Its function is as follows. Involved in the third step of the chorismate pathway, which leads to the biosynthesis of aromatic amino acids. Catalyzes the cis-dehydration of 3-dehydroquinate (DHQ) and introduces the first double bond of the aromatic ring to yield 3-dehydroshikimate. The protein is 3-dehydroquinate dehydratase of Clostridium kluyveri (strain NBRC 12016).